The sequence spans 618 residues: Serine--tRNA ligase, cytoplasmic (618 aa).

417 to 419 (TSE) is an L-serine binding site. Residue 448-450 (RTE) coordinates ATP. Residue E472 coordinates L-serine. 536–539 (EVSS) contributes to the ATP binding site. S570 serves as a coordination point for L-serine.

Belongs to the class-II aminoacyl-tRNA synthetase family. Type-1 seryl-tRNA synthetase subfamily. In terms of assembly, homodimer. The tRNA molecule binds across the dimer.

It is found in the cytoplasm. It catalyses the reaction tRNA(Ser) + L-serine + ATP = L-seryl-tRNA(Ser) + AMP + diphosphate + H(+). The enzyme catalyses tRNA(Sec) + L-serine + ATP = L-seryl-tRNA(Sec) + AMP + diphosphate + H(+). It functions in the pathway aminoacyl-tRNA biosynthesis; selenocysteinyl-tRNA(Sec) biosynthesis; L-seryl-tRNA(Sec) from L-serine and tRNA(Sec): step 1/1. Functionally, catalyzes the attachment of serine to tRNA(Ser). Is also able to aminoacylate tRNA(Sec) with serine, to form the misacylated tRNA L-seryl-tRNA(Sec), which will be further converted into selenocysteinyl-tRNA(Sec). The sequence is that of Serine--tRNA ligase, cytoplasmic from Plasmodium falciparum (isolate 3D7).